We begin with the raw amino-acid sequence, 425 residues long: Serine hydroxymethyltransferase (425 aa).

Residues Leu128 and 132-134 (GHL) each bind (6S)-5,6,7,8-tetrahydrofolate. At Lys237 the chain carries N6-(pyridoxal phosphate)lysine.

Belongs to the SHMT family. As to quaternary structure, homodimer. It depends on pyridoxal 5'-phosphate as a cofactor.

It is found in the cytoplasm. The catalysed reaction is (6R)-5,10-methylene-5,6,7,8-tetrahydrofolate + glycine + H2O = (6S)-5,6,7,8-tetrahydrofolate + L-serine. It participates in one-carbon metabolism; tetrahydrofolate interconversion. The protein operates within amino-acid biosynthesis; glycine biosynthesis; glycine from L-serine: step 1/1. Functionally, catalyzes the reversible interconversion of serine and glycine with tetrahydrofolate (THF) serving as the one-carbon carrier. This reaction serves as the major source of one-carbon groups required for the biosynthesis of purines, thymidylate, methionine, and other important biomolecules. Also exhibits THF-independent aldolase activity toward beta-hydroxyamino acids, producing glycine and aldehydes, via a retro-aldol mechanism. This is Serine hydroxymethyltransferase from Wolbachia pipientis wMel.